A 216-amino-acid polypeptide reads, in one-letter code: Protein Syd (216 aa).

It belongs to the Syd family.

The protein resides in the cell inner membrane. Its function is as follows. Interacts with the SecY protein in vivo. May bind preferentially to an uncomplexed state of SecY, thus functioning either as a chelating agent for excess SecY in the cell or as a regulatory factor that negatively controls the translocase function. The sequence is that of Protein Syd from Shewanella sp. (strain MR-7).